The chain runs to 226 residues: Uracil-DNA glycosylase (226 aa).

The Proton acceptor role is filled by D64.

Belongs to the uracil-DNA glycosylase (UDG) superfamily. UNG family.

It is found in the cytoplasm. The enzyme catalyses Hydrolyzes single-stranded DNA or mismatched double-stranded DNA and polynucleotides, releasing free uracil.. Functionally, excises uracil residues from the DNA which can arise as a result of misincorporation of dUMP residues by DNA polymerase or due to deamination of cytosine. This chain is Uracil-DNA glycosylase, found in Vibrio cholerae serotype O1 (strain ATCC 39541 / Classical Ogawa 395 / O395).